A 321-amino-acid polypeptide reads, in one-letter code: Cytochrome c biogenesis protein CcsA (321 aa).

8 consecutive transmembrane segments (helical) span residues 17–37 (VVSIVIIIHFLTLLVNEFVGL), 48–68 (TFFCLTGLLITRWIYSGHLPI), 71–91 (LYESLIFLSWIFSIIHMVPYF), 98–118 (LSTITAPSTFFTQGFATWGLL), 143–163 (MVSGYAALLCGSLLSAALLVI), 225–245 (ILSIGFLFLTIGILSGAVWAN), 259–273 (TWAFITWTIFAIYFH), and 286–306 (AIVASIGFLIIWICYFGVNLL).

Belongs to the CcmF/CycK/Ccl1/NrfE/CcsA family. May interact with Ccs1.

The protein resides in the plastid. Its subcellular location is the chloroplast thylakoid membrane. Required during biogenesis of c-type cytochromes (cytochrome c6 and cytochrome f) at the step of heme attachment. This Populus alba (White poplar) protein is Cytochrome c biogenesis protein CcsA.